A 78-amino-acid polypeptide reads, in one-letter code: Acyl carrier protein (78 aa).

The 76-residue stretch at 2 to 77 folds into the Carrier domain; that stretch reads STIEERVKKI…AAIDYVNAHQ (76 aa). At S37 the chain carries O-(pantetheine 4'-phosphoryl)serine.

The protein belongs to the acyl carrier protein (ACP) family. Post-translationally, 4'-phosphopantetheine is transferred from CoA to a specific serine of apo-ACP by AcpS. This modification is essential for activity because fatty acids are bound in thioester linkage to the sulfhydryl of the prosthetic group.

It is found in the cytoplasm. The protein operates within lipid metabolism; fatty acid biosynthesis. Carrier of the growing fatty acid chain in fatty acid biosynthesis. The chain is Acyl carrier protein from Pseudomonas entomophila (strain L48).